A 138-amino-acid polypeptide reads, in one-letter code: Small ribosomal subunit protein uS8c (138 aa).

Belongs to the universal ribosomal protein uS8 family. As to quaternary structure, part of the 30S ribosomal subunit.

Its subcellular location is the plastid. The protein localises to the chloroplast. In terms of biological role, one of the primary rRNA binding proteins, it binds directly to 16S rRNA central domain where it helps coordinate assembly of the platform of the 30S subunit. The protein is Small ribosomal subunit protein uS8c (rps8) of Oenothera elata subsp. hookeri (Hooker's evening primrose).